The primary structure comprises 367 residues: Holliday junction branch migration complex subunit RuvB (367 aa).

The segment at 2 to 196 is large ATPase domain (RuvB-L); the sequence is TDEPLTDRPP…FGFTARLDFY (195 aa). Residues Leu35, Arg36, Gly77, Lys80, Thr81, Thr82, 143 to 145, Arg186, Tyr196, and Arg233 contribute to the ATP site; that span reads EDF. Thr81 serves as a coordination point for Mg(2+). A small ATPAse domain (RuvB-S) region spans residues 197–267; it reads EPADLERIVH…VAQAALAVYE (71 aa). The interval 270–367 is head domain (RuvB-H); that stretch reads EHGLDRLDRA…IDRDAGEPTA (98 aa). DNA contacts are provided by Arg325 and Arg330.

The protein belongs to the RuvB family. As to quaternary structure, homohexamer. Forms an RuvA(8)-RuvB(12)-Holliday junction (HJ) complex. HJ DNA is sandwiched between 2 RuvA tetramers; dsDNA enters through RuvA and exits via RuvB. An RuvB hexamer assembles on each DNA strand where it exits the tetramer. Each RuvB hexamer is contacted by two RuvA subunits (via domain III) on 2 adjacent RuvB subunits; this complex drives branch migration. In the full resolvosome a probable DNA-RuvA(4)-RuvB(12)-RuvC(2) complex forms which resolves the HJ.

Its subcellular location is the cytoplasm. It carries out the reaction ATP + H2O = ADP + phosphate + H(+). Functionally, the RuvA-RuvB-RuvC complex processes Holliday junction (HJ) DNA during genetic recombination and DNA repair, while the RuvA-RuvB complex plays an important role in the rescue of blocked DNA replication forks via replication fork reversal (RFR). RuvA specifically binds to HJ cruciform DNA, conferring on it an open structure. The RuvB hexamer acts as an ATP-dependent pump, pulling dsDNA into and through the RuvAB complex. RuvB forms 2 homohexamers on either side of HJ DNA bound by 1 or 2 RuvA tetramers; 4 subunits per hexamer contact DNA at a time. Coordinated motions by a converter formed by DNA-disengaged RuvB subunits stimulates ATP hydrolysis and nucleotide exchange. Immobilization of the converter enables RuvB to convert the ATP-contained energy into a lever motion, pulling 2 nucleotides of DNA out of the RuvA tetramer per ATP hydrolyzed, thus driving DNA branch migration. The RuvB motors rotate together with the DNA substrate, which together with the progressing nucleotide cycle form the mechanistic basis for DNA recombination by continuous HJ branch migration. Branch migration allows RuvC to scan DNA until it finds its consensus sequence, where it cleaves and resolves cruciform DNA. In Acidothermus cellulolyticus (strain ATCC 43068 / DSM 8971 / 11B), this protein is Holliday junction branch migration complex subunit RuvB.